The sequence spans 373 residues: Dual-specificity RNA methyltransferase RlmN (373 aa).

The Proton acceptor role is filled by E94. The Radical SAM core domain occupies 100 to 339; the sequence is EDDRATLCVS…VIVRKTRGDD (240 aa). A disulfide bridge connects residues C107 and C344. Residues C114, C118, and C121 each contribute to the [4Fe-4S] cluster site. S-adenosyl-L-methionine-binding positions include 168 to 169, S200, 222 to 224, and N301; these read GE and SIH. C344 functions as the S-methylcysteine intermediate in the catalytic mechanism.

The protein belongs to the radical SAM superfamily. RlmN family. It depends on [4Fe-4S] cluster as a cofactor.

It localises to the cytoplasm. The catalysed reaction is adenosine(2503) in 23S rRNA + 2 reduced [2Fe-2S]-[ferredoxin] + 2 S-adenosyl-L-methionine = 2-methyladenosine(2503) in 23S rRNA + 5'-deoxyadenosine + L-methionine + 2 oxidized [2Fe-2S]-[ferredoxin] + S-adenosyl-L-homocysteine. It catalyses the reaction adenosine(37) in tRNA + 2 reduced [2Fe-2S]-[ferredoxin] + 2 S-adenosyl-L-methionine = 2-methyladenosine(37) in tRNA + 5'-deoxyadenosine + L-methionine + 2 oxidized [2Fe-2S]-[ferredoxin] + S-adenosyl-L-homocysteine. In terms of biological role, specifically methylates position 2 of adenine 2503 in 23S rRNA and position 2 of adenine 37 in tRNAs. m2A2503 modification seems to play a crucial role in the proofreading step occurring at the peptidyl transferase center and thus would serve to optimize ribosomal fidelity. The polypeptide is Dual-specificity RNA methyltransferase RlmN (Shewanella baltica (strain OS223)).